The sequence spans 391 residues: MDLYEYQARDLFEKHGVPVLRGIVAETPEQASEAAAKLGTPVVAVKAQVKVGGRGKAGGVKIAKSAAEAAERAEAILGMDIKGHTVHKVMVAEGADIAEEYYFSILLDRGERRYLAMCSREGGMDIETLAKERPEALAKVPVDPIDGVDDAKAREILSEAGFPDSEQDAIVPAVLKLWETYRDEDATLVEVNPMIKTGDGRILAIDGKMTVDNNASFRQPDHAGLVDRATTDPLELRAGELGLNYVKLDGNVGVIGNGAGLVMSTLDCVAYAGENFPGSPAPANFLDIGGGASAEIMANGLDLIMSDEQVRSVFVNVFGGITACDQVALGIKGALEKLGDKAVKPLVVRLDGNAVAEGRKILEEFNYPLVTMVSTMDEAASKAAELASKEA.

The region spanning 9–237 (RDLFEKHGVP…RATTDPLELR (229 aa)) is the ATP-grasp domain. ATP contacts are provided by residues lysine 46, 53 to 55 (GRG), alanine 95, and glutamate 100. The Mg(2+) site is built by asparagine 192 and aspartate 206. Residues asparagine 257 and 320-322 (GIT) contribute to the substrate site.

It belongs to the succinate/malate CoA ligase beta subunit family. As to quaternary structure, heterotetramer of two alpha and two beta subunits. The cofactor is Mg(2+).

The enzyme catalyses succinate + ATP + CoA = succinyl-CoA + ADP + phosphate. The catalysed reaction is GTP + succinate + CoA = succinyl-CoA + GDP + phosphate. Its pathway is carbohydrate metabolism; tricarboxylic acid cycle; succinate from succinyl-CoA (ligase route): step 1/1. Succinyl-CoA synthetase functions in the citric acid cycle (TCA), coupling the hydrolysis of succinyl-CoA to the synthesis of either ATP or GTP and thus represents the only step of substrate-level phosphorylation in the TCA. The beta subunit provides nucleotide specificity of the enzyme and binds the substrate succinate, while the binding sites for coenzyme A and phosphate are found in the alpha subunit. This Cutibacterium acnes (strain DSM 16379 / KPA171202) (Propionibacterium acnes) protein is Succinate--CoA ligase [ADP-forming] subunit beta.